A 274-amino-acid chain; its full sequence is Cytochrome b-c1 complex subunit Rieske, mitochondrial (274 aa).

Topologically, residues 79–103 (SHTDVKVPDFYDYRRLEVLDSTKSS) are mitochondrial matrix. A helical transmembrane segment spans residues 104–140 (RESSEARKGFSYLVTAVTTVGVAYAAKNVVTQFISSM). Residues 141-274 (SASADVLAMA…FTGDDVVVVG (134 aa)) are Mitochondrial intermembrane-facing. The Rieske domain maps to 187-272 (EAAVELSQLR…YEFTGDDVVV (86 aa)). [2Fe-2S] cluster contacts are provided by Cys-217, His-219, Cys-236, His-239, and Ser-241. Cys-222 and Cys-238 are oxidised to a cystine.

This sequence belongs to the Rieske iron-sulfur protein family. In terms of assembly, component of the ubiquinol-cytochrome c oxidoreductase (cytochrome b-c1 complex, complex III, CIII), a multisubunit enzyme composed of 11 subunits. The complex is composed of 3 respiratory subunits cytochrome b, cytochrome c1 and Rieske protein UQCRFS1, 2 core protein subunits UQCRC1/QCR1 and UQCRC2/QCR2, and 6 low-molecular weight protein subunits UQCRH/QCR6, UQCRB/QCR7, UQCRQ/QCR8, UQCR10/QCR9, UQCR11/QCR10 and subunit 9, the cleavage product of Rieske protein UQCRFS1. The complex exists as an obligatory dimer and forms supercomplexes (SCs) in the inner mitochondrial membrane with NADH-ubiquinone oxidoreductase (complex I, CI) and cytochrome c oxidase (complex IV, CIV), resulting in different assemblies (supercomplex SCI(1)III(2)IV(1) and megacomplex MCI(2)III(2)IV(2)). Incorporation of the Rieske protein UQCRFS1 is the penultimate step in complex III assembly. Interacts with TTC19, which is involved in the clearance of UQCRFS1 fragments. As to quaternary structure, component of the ubiquinol-cytochrome c oxidoreductase (cytochrome b-c1 complex, complex III, CIII). Subunit 9 corresponds to the mitochondrial targeting sequence (MTS) of Rieske protein UQCRFS1. It is retained after processing and incorporated inside complex III, where it remains bound to the complex and localizes between the 2 core subunits UQCRC1/QCR1 and UQCRC2/QCR2. The cofactor is [2Fe-2S] cluster. Post-translationally, proteolytic processing is necessary for the correct insertion of UQCRFS1 in the complex III dimer. Several fragments are generated during UQCRFS1 insertion, most probably due to the endogenous matrix-processing peptidase (MPP) activity of the 2 core protein subunits UQCRC1/QCR1 and UQCRC2/QCR2, which are homologous to the 2 mitochondrial-processing peptidase (MPP) subunits beta-MPP and alpha-MPP respectively. The action of the protease is also necessary for the clearance of the UQCRFS1 fragments.

It localises to the mitochondrion inner membrane. It carries out the reaction a quinol + 2 Fe(III)-[cytochrome c](out) = a quinone + 2 Fe(II)-[cytochrome c](out) + 2 H(+)(out). Its function is as follows. Component of the ubiquinol-cytochrome c oxidoreductase, a multisubunit transmembrane complex that is part of the mitochondrial electron transport chain which drives oxidative phosphorylation. The respiratory chain contains 3 multisubunit complexes succinate dehydrogenase (complex II, CII), ubiquinol-cytochrome c oxidoreductase (cytochrome b-c1 complex, complex III, CIII) and cytochrome c oxidase (complex IV, CIV), that cooperate to transfer electrons derived from NADH and succinate to molecular oxygen, creating an electrochemical gradient over the inner membrane that drives transmembrane transport and the ATP synthase. The cytochrome b-c1 complex catalyzes electron transfer from ubiquinol to cytochrome c, linking this redox reaction to translocation of protons across the mitochondrial inner membrane, with protons being carried across the membrane as hydrogens on the quinol. In the process called Q cycle, 2 protons are consumed from the matrix, 4 protons are released into the intermembrane space and 2 electrons are passed to cytochrome c. The Rieske protein is a catalytic core subunit containing a [2Fe-2S] iron-sulfur cluster. It cycles between 2 conformational states during catalysis to transfer electrons from the quinol bound in the Q(0) site in cytochrome b to cytochrome c1. Incorporation of UQCRFS1 is the penultimate step in complex III assembly. In terms of biological role, component of the ubiquinol-cytochrome c oxidoreductase (cytochrome b-c1 complex, complex III, CIII). UQCRFS1 undergoes proteolytic processing once it is incorporated in the complex III dimer. One of the fragments, called subunit 9, corresponds to its mitochondrial targeting sequence (MTS). The proteolytic processing is necessary for the correct insertion of UQCRFS1 in the complex III dimer, but the persistence of UQCRFS1-derived fragments may prevent newly imported UQCRFS1 to be processed and assembled into complex III and is detrimental for the complex III structure and function. In Chlorocebus aethiops (Green monkey), this protein is Cytochrome b-c1 complex subunit Rieske, mitochondrial (UQCRFS1).